A 482-amino-acid polypeptide reads, in one-letter code: UDP-N-acetylmuramate--L-alanine ligase (482 aa).

An ATP-binding site is contributed by Gly129 to Thr135.

This sequence belongs to the MurCDEF family.

The protein localises to the cytoplasm. It carries out the reaction UDP-N-acetyl-alpha-D-muramate + L-alanine + ATP = UDP-N-acetyl-alpha-D-muramoyl-L-alanine + ADP + phosphate + H(+). The protein operates within cell wall biogenesis; peptidoglycan biosynthesis. Its function is as follows. Cell wall formation. The sequence is that of UDP-N-acetylmuramate--L-alanine ligase from Acinetobacter baylyi (strain ATCC 33305 / BD413 / ADP1).